A 282-amino-acid chain; its full sequence is Elongation factor Ts (282 aa).

The tract at residues 80 to 83 (TDFV) is involved in Mg(2+) ion dislocation from EF-Tu.

This sequence belongs to the EF-Ts family.

It is found in the cytoplasm. Functionally, associates with the EF-Tu.GDP complex and induces the exchange of GDP to GTP. It remains bound to the aminoacyl-tRNA.EF-Tu.GTP complex up to the GTP hydrolysis stage on the ribosome. In Chlamydia pneumoniae (Chlamydophila pneumoniae), this protein is Elongation factor Ts (tsf).